The chain runs to 763 residues: MMRYSLLCTCLFLAWWAIGGRGLATPYPSTPEFSGSPGSRATSGSPGTPKSLSATPRKILPTAKSVNYTEMIEKNPSLTIDLGNQTKYQLNWTDVVKVIPGELIEKMWEESNVTESLWFTLNKFTDVYKKDTIFKNFTGHFTTKYVCNVSQGEPNYNVSQREVKEIKEYDGKFGIPAPVVLSDLLASVNYVLRPQHATHNVFYTTRDYDAYFSVFFGDKDTQMLGYITRDFSFVTAVSWTNGTFRFLTTMMGYTDRLPVLKGHLIYKTDFIVGQNERFSMVILTTFLDHAYFESLVHPDFQGIFKDLTERPPAEVIVELQDKMVELEATQKCPVQSMSKITFEYVLKFAFSHFMAVAGLEDAGQHVKVRCLFDVLHELALLRAMTATCFHPFYFKGFTSNHLSSVATVMVTRTPIKQLKTFSHGDRDAVLATLQVADNVKEATDRILWAAAEIMDDIYTAYTDSFYLKLEDRGHLLDVFVLLRDKEKQHQVLKNRNLMIIYLTAGSMCNSVEISTVTSMLSDKNHYSLRRTFSPCLMSLRFDFTKDKLISETRLLPNMTYLRAEDGATGFFNILRDRHVATFNLLPVSSCLKAYAKNILMVIPMFNLTYVVSTAPISIGINYDVRDTFIEKKMFVSAVMSNCSTFPEGSGTRQIPIVYNITRSRSECPLCGAAFLAYDERDGLESMMYVTNRRVERNIFSDASPFFDNQNLHTHYLMLFKNGTVIEIRGRYRERTAQFIIITLFILTLMFGAFLAFKIFVYCC.

The N-terminal stretch at 1–22 is a signal peptide; it reads MMRYSLLCTCLFLAWWAIGGRG. Residues 23–739 are Virion surface-facing; that stretch reads LATPYPSTPE…RYRERTAQFI (717 aa). The tract at residues 29-56 is disordered; that stretch reads STPEFSGSPGSRATSGSPGTPKSLSATP. Positions 31 to 54 are enriched in polar residues; that stretch reads PEFSGSPGSRATSGSPGTPKSLSA. Residues asparagine 67, asparagine 84, asparagine 91, asparagine 112, asparagine 136, asparagine 148, asparagine 157, asparagine 241, asparagine 557, asparagine 606, asparagine 641, asparagine 659, and asparagine 721 are each glycosylated (N-linked (GlcNAc...) asparagine; by host). Residues 219–283 form an interaction with gL region; it reads KDTQMLGYIT…QNERFSMVIL (65 aa). Residues 740–760 form a helical membrane-spanning segment; the sequence is IITLFILTLMFGAFLAFKIFV. At 761 to 763 the chain is on the intravirion side; sequence YCC.

It belongs to the herpesviridae glycoprotein H family. As to quaternary structure, interacts with glycoprotein L (gL); this interaction is necessary for the correct processing and cell surface expression of gH. The heterodimer gH/gL seems to interact with gB trimers during fusion. N-glycosylated, O-glycosylated, and sialylated.

The protein resides in the virion membrane. Its subcellular location is the host cell membrane. It localises to the host endosome membrane. In terms of biological role, the heterodimer glycoprotein H-glycoprotein L is required for the fusion of viral and plasma membranes leading to virus entry into the host cell. Following initial binding to host receptor, membrane fusion is mediated by the fusion machinery composed of gB and the heterodimer gH/gL. May also be involved in the fusion between the virion envelope and the outer nuclear membrane during virion morphogenesis. The polypeptide is Envelope glycoprotein H (Equus caballus (Horse)).